A 293-amino-acid polypeptide reads, in one-letter code: Pyridoxal 5'-phosphate synthase subunit PdxS (293 aa).

Residue D23 participates in D-ribose 5-phosphate binding. Residue K80 is the Schiff-base intermediate with D-ribose 5-phosphate of the active site. G152 is a binding site for D-ribose 5-phosphate. R164 is a binding site for D-glyceraldehyde 3-phosphate. Residues G213 and 234 to 235 each bind D-ribose 5-phosphate; that span reads GS.

Belongs to the PdxS/SNZ family. In the presence of PdxT, forms a dodecamer of heterodimers.

It catalyses the reaction aldehydo-D-ribose 5-phosphate + D-glyceraldehyde 3-phosphate + L-glutamine = pyridoxal 5'-phosphate + L-glutamate + phosphate + 3 H2O + H(+). The protein operates within cofactor biosynthesis; pyridoxal 5'-phosphate biosynthesis. In terms of biological role, catalyzes the formation of pyridoxal 5'-phosphate from ribose 5-phosphate (RBP), glyceraldehyde 3-phosphate (G3P) and ammonia. The ammonia is provided by the PdxT subunit. Can also use ribulose 5-phosphate and dihydroxyacetone phosphate as substrates, resulting from enzyme-catalyzed isomerization of RBP and G3P, respectively. The protein is Pyridoxal 5'-phosphate synthase subunit PdxS of Roseiflexus castenholzii (strain DSM 13941 / HLO8).